A 680-amino-acid chain; its full sequence is 1-deoxy-D-xylulose-5-phosphate synthase (680 aa).

Thiamine diphosphate-binding positions include His113 and 154 to 156 (GHS). Asp185 is a binding site for Mg(2+). Residues 186–187 (GA), Asn214, Phe323, and Glu408 contribute to the thiamine diphosphate site. Residue Asn214 participates in Mg(2+) binding.

This sequence belongs to the transketolase family. DXPS subfamily. Homodimer. Mg(2+) is required as a cofactor. Requires thiamine diphosphate as cofactor.

It catalyses the reaction D-glyceraldehyde 3-phosphate + pyruvate + H(+) = 1-deoxy-D-xylulose 5-phosphate + CO2. It participates in metabolic intermediate biosynthesis; 1-deoxy-D-xylulose 5-phosphate biosynthesis; 1-deoxy-D-xylulose 5-phosphate from D-glyceraldehyde 3-phosphate and pyruvate: step 1/1. In terms of biological role, catalyzes the acyloin condensation reaction between C atoms 2 and 3 of pyruvate and glyceraldehyde 3-phosphate to yield 1-deoxy-D-xylulose-5-phosphate (DXP). The sequence is that of 1-deoxy-D-xylulose-5-phosphate synthase from Psychrobacter arcticus (strain DSM 17307 / VKM B-2377 / 273-4).